A 93-amino-acid chain; its full sequence is Large ribosomal subunit protein uL23 (93 aa).

The protein belongs to the universal ribosomal protein uL23 family. As to quaternary structure, part of the 50S ribosomal subunit. Contacts protein L29, and trigger factor when it is bound to the ribosome.

Functionally, one of the early assembly proteins it binds 23S rRNA. One of the proteins that surrounds the polypeptide exit tunnel on the outside of the ribosome. Forms the main docking site for trigger factor binding to the ribosome. This chain is Large ribosomal subunit protein uL23, found in Nitratiruptor sp. (strain SB155-2).